A 367-amino-acid polypeptide reads, in one-letter code: MSYYNIFLDFLSYIGSGAALFIKIIAVIISVMISVAYLVYMERKVIAAIQLRQGPNVVGPFGLLQPFADAVKLIIKEHIIPFKSNKICFLIAPIITFTLALLGWAVIPFGADVIVNDGYEVIIPNAIANINIGVLYILAISSLGVYGIIIAGWSSNSNYAFLGAIRSASQMISYEVSIGLTIVTVLLATGSLKLGEIVVARHNMPYWIDLLLLPMACIFFISALAETNRHPFDLPEAESELVSGYNVEYSSMPFALFFLGEYANMILINAMAVIFFFGGWYPPLNIGFLYIIPGIVWFVLKVVALLFCFIWIRATIPRYRYDQLMGLGWKVFLPISLLWVVLVSSILVYTDSLPSNNKQYVSHAMHK.

8 helical membrane-spanning segments follow: residues 19–39, 87–107, 132–152, 178–198, 204–224, 266–286, 291–311, and 328–348; these read ALFIKIIAVIISVMISVAYLV, ICFLIAPIITFTLALLGWAVI, IGVLYILAISSLGVYGIIIAG, IGLTIVTVLLATGSLKLGEIV, MPYWIDLLLLPMACIFFISAL, ILINAMAVIFFFGGWYPPLNI, IIPGIVWFVLKVVALLFCFIW, and GWKVFLPISLLWVVLVSSILV.

This sequence belongs to the complex I subunit 1 family. As to quaternary structure, NDH-1 is composed of 14 different subunits. Subunits NuoA, H, J, K, L, M, N constitute the membrane sector of the complex.

The protein resides in the cell inner membrane. It carries out the reaction a quinone + NADH + 5 H(+)(in) = a quinol + NAD(+) + 4 H(+)(out). In terms of biological role, NDH-1 shuttles electrons from NADH, via FMN and iron-sulfur (Fe-S) centers, to quinones in the respiratory chain. The immediate electron acceptor for the enzyme in this species is believed to be ubiquinone. Couples the redox reaction to proton translocation (for every two electrons transferred, four hydrogen ions are translocated across the cytoplasmic membrane), and thus conserves the redox energy in a proton gradient. This subunit may bind ubiquinone. The protein is NADH-quinone oxidoreductase subunit H of Ehrlichia chaffeensis (strain ATCC CRL-10679 / Arkansas).